Here is a 153-residue protein sequence, read N- to C-terminus: 17.6 kDa class I heat shock protein (153 aa).

One can recognise a sHSP domain in the interval 38 to 153 (ETAAIVNARI…PMVKAIDISG (116 aa)).

It belongs to the small heat shock protein (HSP20) family. As to quaternary structure, forms oligomeric structures.

Its subcellular location is the cytoplasm. This Helianthus annuus (Common sunflower) protein is 17.6 kDa class I heat shock protein (HSP17.6).